The chain runs to 346 residues: Very-long-chain 3-oxoacyl-CoA reductase (346 aa).

The helical transmembrane segment at 23–43 (AAWIVFGLGISKMVFLTLNFS) threads the bilayer. NADP(+) is bound by residues Val69, Asp123, Asn150, Tyr222, Lys226, Val255, and Ser257. Tyr222 (proton donor) is an active-site residue. The Lowers pKa of active site Tyr role is filled by Lys226.

It belongs to the short-chain dehydrogenases/reductases (SDR) family.

The protein resides in the endoplasmic reticulum membrane. It catalyses the reaction a very-long-chain (3R)-3-hydroxyacyl-CoA + NADP(+) = a very-long-chain 3-oxoacyl-CoA + NADPH + H(+). The protein operates within lipid metabolism; fatty acid biosynthesis. Its function is as follows. Component of the microsomal membrane bound fatty acid elongation system, which produces the 26-carbon very long-chain fatty acids (VLCFA) from palmitate. Catalyzes the reduction of the 3-ketoacyl-CoA intermediate that is formed in each cycle of fatty acid elongation. VLCFAs serve as precursors for ceramide and sphingolipids. The protein is Very-long-chain 3-oxoacyl-CoA reductase of Kluyveromyces lactis (strain ATCC 8585 / CBS 2359 / DSM 70799 / NBRC 1267 / NRRL Y-1140 / WM37) (Yeast).